Consider the following 213-residue polypeptide: Viral dihydrofolate reductase (213 aa).

The DHFR domain maps to 4-184 (LLNCIVAVDQ…IKYKFEVYEK (181 aa)). NADP(+) contacts are provided by residues A10 and 16-22 (GIGKKGH). A substrate-binding site is contributed by 31-36 (DFKYFQ). 54 to 56 (KNT) provides a ligand contact to NADP(+). Residue R70 coordinates substrate. NADP(+) contacts are provided by residues 76-78 (SKK) and 116-123 (GGSSVYKD).

Belongs to the dihydrofolate reductase family.

It catalyses the reaction (6S)-5,6,7,8-tetrahydrofolate + NADP(+) = 7,8-dihydrofolate + NADPH + H(+). It participates in cofactor biosynthesis; tetrahydrofolate biosynthesis; 5,6,7,8-tetrahydrofolate from 7,8-dihydrofolate: step 1/1. Its function is as follows. Key enzyme in folate metabolism. Catalyzes an essential reaction for de novo glycine and purine synthesis, and for DNA precursor synthesis. The polypeptide is Viral dihydrofolate reductase (DHFR) (Saimiri sciureus (Common squirrel monkey)).